Reading from the N-terminus, the 138-residue chain is Holo-[acyl-carrier-protein] synthase (138 aa).

Mg(2+) contacts are provided by Asp-11 and Glu-65.

The protein belongs to the P-Pant transferase superfamily. AcpS family. Requires Mg(2+) as cofactor.

The protein localises to the cytoplasm. It carries out the reaction apo-[ACP] + CoA = holo-[ACP] + adenosine 3',5'-bisphosphate + H(+). Transfers the 4'-phosphopantetheine moiety from coenzyme A to a Ser of acyl-carrier-protein. The protein is Holo-[acyl-carrier-protein] synthase of Ralstonia nicotianae (strain ATCC BAA-1114 / GMI1000) (Ralstonia solanacearum).